A 278-amino-acid chain; its full sequence is MQKETWRFIDSGNASPAFNMALDEALLYWHSEKKIPPVIRFYGWNPATLSVGYFQNIKKEINFEAVHKYNLGFVRRPTGGRGVLHDQELTYSVIVSEEHPEMPATVTEAYRVISEGILQGFRNLGLDAYFAIPRTEKEKESLKNPRSSVCFDAPSWYELVVEGRKVAGSAQTRQKGVILQHGSILLDLDEDKLFDLFLYPSERVRERMQRNFKNKAVAINELIEKRVTMDEARKAFKEGFETGLNIHLEPYELSQEELDFVHHLAETKYASDEWNYKR.

Positions 33 to 248 (KKIPPVIRFY…GFETGLNIHL (216 aa)) constitute a BPL/LPL catalytic domain. Cys-150 serves as the catalytic Acyl-thioester intermediate.

This sequence belongs to the octanoyltransferase LipM family. As to quaternary structure, monomer.

It carries out the reaction octanoyl-[ACP] + L-lysyl-[protein] = N(6)-octanoyl-L-lysyl-[protein] + holo-[ACP] + H(+). It functions in the pathway protein modification; protein lipoylation via endogenous pathway; protein N(6)-(lipoyl)lysine from octanoyl-[acyl-carrier-protein]. In terms of biological role, catalyzes the transfer of endogenously produced octanoic acid from octanoyl-acyl-carrier-protein onto the lipoyl domain of GcvH, an intermediate carrier during protein lipoylation. Is also able to catalyze the reverse reaction. Octanoyl-CoA can also act as a substrate although very poorly. Does not display lipoate protein ligase activity, despite its sequence similarity to LplA. In Bacillus subtilis (strain 168), this protein is Octanoyltransferase LipM (lipM).